Reading from the N-terminus, the 61-residue chain is Large ribosomal subunit protein uL29 (61 aa).

This sequence belongs to the universal ribosomal protein uL29 family.

This Campylobacter jejuni subsp. jejuni serotype O:6 (strain 81116 / NCTC 11828) protein is Large ribosomal subunit protein uL29.